We begin with the raw amino-acid sequence, 1210 residues long: uncharacterized protein (1210 aa).

It to E.coli molybdate metabolism regulator (MolR).

This is an uncharacterized protein from Escherichia coli (strain K12).